A 528-amino-acid polypeptide reads, in one-letter code: Major facilitator-type transporter psiT2 (528 aa).

A disordered region spans residues 1-20 (MSPERSASLEPDEHSSLLSD). The next 5 helical transmembrane spans lie at 87 to 107 (FYSGLIESVFACGEVCSIFML), 125 to 145 (LGVALFTALFGLSTSFTMMLV), 148 to 168 (VCAGLLAGATPIVHSVVSELT), 174 to 194 (ALVVPLYGLITPIGFAIGPLI), and 220 to 240 (FLPSFVPCCLAVVGVTFGYFF). The span at 260–270 (STSSISSRTST) shows a compositional bias: low complexity. The disordered stretch occupies residues 260–299 (STSSISSRTSTLYGATDDHNRDASESTALSPEEAEDEIDS). 6 helical membrane passes run 322 to 342 (FLMFLYTSSDVLFSLYCFTAV), 357 to 377 (AFSVAGVIAMLMQLCITPWVL), 388 to 408 (FCMFSFPLVFALMGCLNPLAQ), 424 to 444 (GLLYAAIAVLLLLARVCVMAF), 460 to 479 (LATANGLVQVSMTIARALCP), and 493 to 513 (NILGGHLWVLIMVTISLAGVW).

Belongs to the major facilitator superfamily. TCR/Tet family.

It is found in the membrane. Its function is as follows. Major facilitator-type transporter; part of the gene cluster that mediates the biosynthesis of psilocybin, a psychotropic tryptamine-derived natural product. The protein is Major facilitator-type transporter psiT2 of Psilocybe cyanescens.